The sequence spans 54 residues: Ovomucoid (54 aa).

One can recognise a Kazal-like domain in the interval 4 to 54 (VDCSDYPKPSCTLEDKPLCGSDNQTYSNKCSFCNAVVDSNGTLTLSHFGKC). Intrachain disulfides connect C6–C36, C14–C33, and C22–C54. N43 carries N-linked (GlcNAc...) asparagine glycosylation.

Its subcellular location is the secreted. This Megapodius freycinet (Dusky scrubfowl) protein is Ovomucoid.